Here is a 373-residue protein sequence, read N- to C-terminus: Queuine tRNA-ribosyltransferase (373 aa).

The active-site Proton acceptor is Asp94. Substrate contacts are provided by residues 94 to 98 (DSGGF), Asp148, Gln191, and Gly218. The RNA binding stretch occupies residues 249–255 (GVGTPDY). Asp268 acts as the Nucleophile in catalysis. The interval 273 to 277 (TRIGR) is RNA binding; important for wobble base 34 recognition. Zn(2+) contacts are provided by Cys306, Cys308, Cys311, and His337.

It belongs to the queuine tRNA-ribosyltransferase family. In terms of assembly, homodimer. Within each dimer, one monomer is responsible for RNA recognition and catalysis, while the other monomer binds to the replacement base PreQ1. Zn(2+) serves as cofactor.

It catalyses the reaction 7-aminomethyl-7-carbaguanine + guanosine(34) in tRNA = 7-aminomethyl-7-carbaguanosine(34) in tRNA + guanine. Its pathway is tRNA modification; tRNA-queuosine biosynthesis. In terms of biological role, catalyzes the base-exchange of a guanine (G) residue with the queuine precursor 7-aminomethyl-7-deazaguanine (PreQ1) at position 34 (anticodon wobble position) in tRNAs with GU(N) anticodons (tRNA-Asp, -Asn, -His and -Tyr). Catalysis occurs through a double-displacement mechanism. The nucleophile active site attacks the C1' of nucleotide 34 to detach the guanine base from the RNA, forming a covalent enzyme-RNA intermediate. The proton acceptor active site deprotonates the incoming PreQ1, allowing a nucleophilic attack on the C1' of the ribose to form the product. After dissociation, two additional enzymatic reactions on the tRNA convert PreQ1 to queuine (Q), resulting in the hypermodified nucleoside queuosine (7-(((4,5-cis-dihydroxy-2-cyclopenten-1-yl)amino)methyl)-7-deazaguanosine). In Ruminiclostridium cellulolyticum (strain ATCC 35319 / DSM 5812 / JCM 6584 / H10) (Clostridium cellulolyticum), this protein is Queuine tRNA-ribosyltransferase.